The following is a 122-amino-acid chain: Biogenesis of lysosome-related organelles complex 1 subunit CNL1 (122 aa).

The span at 1 to 10 (MQDNSSHSRE) shows a compositional bias: basic and acidic residues. The interval 1-21 (MQDNSSHSRESASAGDDPLGI) is disordered. Residues 63 to 95 (ENTIDKNIAKFKELLEKCDTLENHYEMLNQLAI) adopt a coiled-coil conformation.

Belongs to the BLOC1S4 family. In terms of assembly, component of the biogenesis of lysosome-related organelles complex-1 (BLOC-1) composed of at least BLI1, BLS1, CNL1, KXD1, SNN1 and VAB2.

The protein resides in the cytoplasm. Its function is as follows. Component of the biogenesis of lysosome-related organelles complex-1 (BLOC-1), a complex that is involved in endosomal cargo sorting. This is Biogenesis of lysosome-related organelles complex 1 subunit CNL1 (CLN1) from Saccharomyces cerevisiae (strain Lalvin QA23) (Baker's yeast).